We begin with the raw amino-acid sequence, 309 residues long: HPr kinase/phosphorylase (309 aa).

Active-site residues include His138 and Lys159. 153 to 160 (GKSGVGKS) lines the ATP pocket. Residue Ser160 coordinates Mg(2+). The active-site Proton acceptor; for phosphorylation activity. Proton donor; for dephosphorylation activity is the Asp177. The important for the catalytic mechanism of both phosphorylation and dephosphorylation stretch occupies residues 201–210 (LEIRGLGIIN). Glu202 serves as a coordination point for Mg(2+). Arg243 is an active-site residue. The tract at residues 264-269 (PVRPGR) is important for the catalytic mechanism of dephosphorylation.

The protein belongs to the HPrK/P family. Homohexamer. Mg(2+) serves as cofactor.

It catalyses the reaction [HPr protein]-L-serine + ATP = [HPr protein]-O-phospho-L-serine + ADP + H(+). The catalysed reaction is [HPr protein]-O-phospho-L-serine + phosphate + H(+) = [HPr protein]-L-serine + diphosphate. In terms of biological role, catalyzes the ATP- as well as the pyrophosphate-dependent phosphorylation of a specific serine residue in HPr, a phosphocarrier protein of the phosphoenolpyruvate-dependent sugar phosphotransferase system (PTS). HprK/P also catalyzes the pyrophosphate-producing, inorganic phosphate-dependent dephosphorylation (phosphorolysis) of seryl-phosphorylated HPr (P-Ser-HPr). The two antagonistic activities of HprK/P are regulated by several intracellular metabolites, which change their concentration in response to the absence or presence of rapidly metabolisable carbon sources (glucose, fructose, etc.) in the growth medium. Also phosphorylates/dephosphorylates the HPr-like catabolite repression protein crh on a specific serine residue. Therefore, by controlling the phosphorylation state of HPr and crh, HPrK/P is a sensor enzyme that plays a major role in the regulation of carbon metabolism and sugar transport: it mediates carbon catabolite repression (CCR), and regulates PTS-catalyzed carbohydrate uptake and inducer exclusion. This is HPr kinase/phosphorylase from Geobacillus thermodenitrificans (strain NG80-2).